Consider the following 270-residue polypeptide: Glutamate racemase (270 aa).

Substrate contacts are provided by residues 10-11 (DS) and 42-43 (YG). Cys-73 functions as the Proton donor/acceptor in the catalytic mechanism. 74–75 (NT) provides a ligand contact to substrate. Cys-184 functions as the Proton donor/acceptor in the catalytic mechanism. 185–186 (TH) serves as a coordination point for substrate.

It belongs to the aspartate/glutamate racemases family.

The enzyme catalyses L-glutamate = D-glutamate. Its pathway is cell wall biogenesis; peptidoglycan biosynthesis. Functionally, provides the (R)-glutamate required for cell wall biosynthesis. This chain is Glutamate racemase, found in Geobacter metallireducens (strain ATCC 53774 / DSM 7210 / GS-15).